Consider the following 217-residue polypeptide: Grancalcin (217 aa).

EF-hand domains follow at residues 48-83, 89-122, 119-154, and 155-180; these read SSAG…SGIN, FSLE…AALN, AALN…MGYR, and LSPQ…DYVA. Ca(2+) is bound by residues aspartate 65, aspartate 69, and glutamate 71. Ca(2+) is bound by residues aspartate 132, aspartate 134, serine 136, threonine 138, and glutamate 143.

In terms of assembly, homodimer. Interacts with SRI and LCP1. In terms of tissue distribution, detected in neutrophils and macrophages (at protein level). Highly expressed in bone marrow.

It localises to the cytoplasm. It is found in the cytoplasmic granule membrane. Its function is as follows. Calcium-binding protein that may play a role in the adhesion of neutrophils to fibronectin. May play a role in the formation of focal adhesions. The sequence is that of Grancalcin (GCA) from Homo sapiens (Human).